We begin with the raw amino-acid sequence, 305 residues long: tRNA-cytidine(32) 2-sulfurtransferase (305 aa).

The tract at residues M1–R20 is disordered. Positions S59–S64 match the PP-loop motif motif. Residues C134, C137, and C225 each contribute to the [4Fe-4S] cluster site. Residues D282–D305 form a disordered region.

Belongs to the TtcA family. As to quaternary structure, homodimer. The cofactor is Mg(2+). [4Fe-4S] cluster is required as a cofactor.

It localises to the cytoplasm. The enzyme catalyses cytidine(32) in tRNA + S-sulfanyl-L-cysteinyl-[cysteine desulfurase] + AH2 + ATP = 2-thiocytidine(32) in tRNA + L-cysteinyl-[cysteine desulfurase] + A + AMP + diphosphate + H(+). It functions in the pathway tRNA modification. In terms of biological role, catalyzes the ATP-dependent 2-thiolation of cytidine in position 32 of tRNA, to form 2-thiocytidine (s(2)C32). The sulfur atoms are provided by the cysteine/cysteine desulfurase (IscS) system. In Xanthomonas axonopodis pv. citri (strain 306), this protein is tRNA-cytidine(32) 2-sulfurtransferase.